The primary structure comprises 375 residues: Neuropeptide Y receptor type 4-2 (375 aa).

Residues 1–39 are Extracellular-facing; it reads MNTSHLLALLLPKSPQGENRSKPLGTPYNFSEHCQDSVD. 3 N-linked (GlcNAc...) asparagine glycosylation sites follow: N2, N19, and N29. The helical transmembrane segment at 40–60 threads the bilayer; it reads VMVFIVTSYSIETVVGVLGNL. Topologically, residues 61 to 87 are cytoplasmic; the sequence is CLMCVTVRQKEKANVTNLLIANLAFSD. Residues 88–108 traverse the membrane as a helical segment; it reads FLMCLLCQPLTAVYTIMDYWI. Residues 109–116 lie on the Extracellular side of the membrane; sequence FGETLCKM. The cysteines at positions 114 and 201 are disulfide-linked. Residues 117-137 form a helical membrane-spanning segment; the sequence is SAFIQCMSVTVSILSLVLVAL. Over 138–155 the chain is Cytoplasmic; sequence ERHQLIINPTGWKPSISQ. The chain crosses the membrane as a helical span at residues 156–176; the sequence is AYLGIVLIWVIACVLSLPFLA. The Extracellular portion of the chain corresponds to 177–212; the sequence is NSILENVFHKNHSKALEFLADKVVCTESWPLAHHRT. N187 carries an N-linked (GlcNAc...) asparagine glycan. Residues 213–233 traverse the membrane as a helical segment; that stretch reads IYTTFLLLFQYCLPLGFILVC. The Cytoplasmic portion of the chain corresponds to 234-263; sequence YARIYRRLQRQGRVFHKGTYSLRAGHMKQV. Residues 264-284 form a helical membrane-spanning segment; the sequence is NVVLVVMVVAFAVLWLPLHVF. Residues 285–301 are Extracellular-facing; the sequence is NSLEDWHHEAIPICHGN. The helical transmembrane segment at 302–322 threads the bilayer; it reads LIFLVCHLLAMASTCVNPFIY. The Cytoplasmic portion of the chain corresponds to 323-375; that stretch reads GFLNTNFKKEIKALVLTCQQSAPLEESEHLPLSTVHTEVSKGSLRLSGRSNPI. The S-palmitoyl cysteine moiety is linked to residue C340.

Belongs to the G-protein coupled receptor 1 family.

It is found in the cell membrane. Its function is as follows. G protein-coupled receptor for PPY/pancreatic polypeptide/PP, NPY/neuropeptide Y and PYY/peptide YY that is negatively coupled to cAMP. The rank order of affinity for these polypeptides and their derivatives is PP, PP (2-36) and [Ile-31, Gln-34] PP &gt; [Pro-34] PYY &gt; PYY and [Leu-31, Pro-34] NPY &gt; NPY &gt; PYY (3-36) and NPY (2-36) &gt; PP (13-36) &gt; PP (31-36) &gt; NPY free acid. The polypeptide is Neuropeptide Y receptor type 4-2 (Homo sapiens (Human)).